The following is a 446-amino-acid chain: Ubiquitin carboxyl-terminal hydrolase MINDY-3 (446 aa).

Cys-51 functions as the Nucleophile in the catalytic mechanism. A compositionally biased stretch (basic and acidic residues) spans 117 to 128 (DNSDITDSHPEP). Residues 117 to 137 (DNSDITDSHPEPESSQPTDTP) form a disordered region. The active-site Proton acceptor is His-288.

The protein belongs to the MINDY deubiquitinase family. FAM188 subfamily.

Its subcellular location is the nucleus. The enzyme catalyses Thiol-dependent hydrolysis of ester, thioester, amide, peptide and isopeptide bonds formed by the C-terminal Gly of ubiquitin (a 76-residue protein attached to proteins as an intracellular targeting signal).. Its function is as follows. Hydrolase that can remove 'Lys-48'-linked conjugated ubiquitin from proteins. This chain is Ubiquitin carboxyl-terminal hydrolase MINDY-3 (mindy3), found in Danio rerio (Zebrafish).